Here is an 882-residue protein sequence, read N- to C-terminus: DNA mismatch repair protein MutS (882 aa).

656 to 663 is an ATP binding site; sequence GPNASGKS.

The protein belongs to the DNA mismatch repair MutS family.

Functionally, this protein is involved in the repair of mismatches in DNA. It is possible that it carries out the mismatch recognition step. This protein has a weak ATPase activity. This is DNA mismatch repair protein MutS from Synechococcus sp. (strain ATCC 27144 / PCC 6301 / SAUG 1402/1) (Anacystis nidulans).